The following is a 248-amino-acid chain: Ureidoacrylate amidohydrolase RutB (248 aa).

The active-site Proton acceptor is the Asp-43. Lys-152 is a catalytic residue. The active-site Nucleophile is Cys-185.

The protein belongs to the isochorismatase family. RutB subfamily.

It catalyses the reaction (Z)-3-ureidoacrylate + H2O + H(+) = (Z)-3-aminoacrylate + NH4(+) + CO2. It carries out the reaction (Z)-3-ureidoacrylate + H2O = (Z)-3-aminoacrylate + carbamate + H(+). The catalysed reaction is (Z)-2-methylureidoacrylate + H2O + H(+) = (Z)-2-methylaminoacrylate + NH4(+) + CO2. In terms of biological role, hydrolyzes ureidoacrylate to form aminoacrylate and carbamate. The carbamate hydrolyzes spontaneously, thereby releasing one of the nitrogen atoms of the pyrimidine ring as ammonia and one of its carbon atoms as CO2. The polypeptide is Ureidoacrylate amidohydrolase RutB (Serratia proteamaculans (strain 568)).